The sequence spans 2939 residues: Serine/threonine-protein kinase tel1 (2939 aa).

Disordered stretches follow at residues 193–212 (GTSV…RAGS), 695–718 (PPED…AADS), and 859–886 (KTRR…ETRK). Over residues 697-715 (EDSHKATSTDQPKREEIRA) the composition is skewed to basic and acidic residues. One can recognise an FAT domain in the interval 1869–2471 (IAAAAATRCG…MYQIWSGVKA (603 aa)). The 314-residue stretch at 2577–2890 (FEPQMSIASG…DKKSTKNLNE (314 aa)) folds into the PI3K/PI4K catalytic domain. The segment at 2583–2589 (IASGVSA) is G-loop. The interval 2755-2763 (GLGDRHGHN) is catalytic loop. The segment at 2775-2799 (HIDLGVAFELGRILPVPELVPFRLT) is activation loop. A disordered region spans residues 2869-2894 (DVVEAEDERRAGDKKSTKNLNEPSEA). The segment covering 2875–2884 (DERRAGDKKS) has biased composition (basic and acidic residues). Residues 2907–2939 (KTLSVMATVNDLINQATDERNLAVLFCGWAAYA) enclose the FATC domain.

The protein belongs to the PI3/PI4-kinase family. ATM subfamily. As to quaternary structure, associates with DNA double-strand breaks.

The protein resides in the nucleus. The protein localises to the chromosome. It localises to the telomere. It catalyses the reaction L-seryl-[protein] + ATP = O-phospho-L-seryl-[protein] + ADP + H(+). The catalysed reaction is L-threonyl-[protein] + ATP = O-phospho-L-threonyl-[protein] + ADP + H(+). Its function is as follows. Serine/threonine protein kinase which activates checkpoint signaling upon genotoxic stresses such as ionizing radiation (IR), ultraviolet light (UV), or DNA replication stalling, thereby acting as a DNA damage sensor. Recognizes the substrate consensus sequence [ST]-Q. Phosphorylates histone H2A to form H2AS128ph (gamma-H2A) at sites of DNA damage, involved in the regulation of DNA damage response mechanism. Required for the control of telomere length and genome stability. This chain is Serine/threonine-protein kinase tel1 (mus-21), found in Neurospora crassa (strain ATCC 24698 / 74-OR23-1A / CBS 708.71 / DSM 1257 / FGSC 987).